Reading from the N-terminus, the 265-residue chain is Tryptophan synthase alpha chain (265 aa).

Active-site proton acceptor residues include Glu49 and Asp60.

It belongs to the TrpA family. In terms of assembly, tetramer of two alpha and two beta chains.

It catalyses the reaction (1S,2R)-1-C-(indol-3-yl)glycerol 3-phosphate + L-serine = D-glyceraldehyde 3-phosphate + L-tryptophan + H2O. The protein operates within amino-acid biosynthesis; L-tryptophan biosynthesis; L-tryptophan from chorismate: step 5/5. In terms of biological role, the alpha subunit is responsible for the aldol cleavage of indoleglycerol phosphate to indole and glyceraldehyde 3-phosphate. The sequence is that of Tryptophan synthase alpha chain from Cupriavidus taiwanensis (strain DSM 17343 / BCRC 17206 / CCUG 44338 / CIP 107171 / LMG 19424 / R1) (Ralstonia taiwanensis (strain LMG 19424)).